Reading from the N-terminus, the 696-residue chain is ATP-dependent zinc metalloprotease FtsH (696 aa).

At 1–29 (MWLQVTNCSTLHSSLSYCGANTLSDMAKN) the chain is on the cytoplasmic side. A helical membrane pass occupies residues 30–50 (LILWLVIAVVLMSVFQSFGPS). The Periplasmic portion of the chain corresponds to 51-124 (DSAGRQVDYT…LGTPPEEPSL (74 aa)). The chain crosses the membrane as a helical span at residues 125-145 (LASIFISWFPMLLLIGVWVFF). The Cytoplasmic segment spans residues 146 to 696 (MRQMQGGGGG…APKEDDKPQA (551 aa)). Position 219–226 (219–226 (GPPGTGKT)) interacts with ATP. Residue His441 participates in Zn(2+) binding. Glu442 is an active-site residue. His445 and Asp519 together coordinate Zn(2+). A disordered region spans residues 627–696 (RAPKGWGDTD…APKEDDKPQA (70 aa)). Over residues 650 to 696 (PEAKTESAPEAKAEANVETEEKPVAADSEELKPKAEQAPKEDDKPQA) the composition is skewed to basic and acidic residues.

This sequence in the central section; belongs to the AAA ATPase family. In the C-terminal section; belongs to the peptidase M41 family. Homohexamer. Zn(2+) is required as a cofactor.

It localises to the cell inner membrane. In terms of biological role, acts as a processive, ATP-dependent zinc metallopeptidase for both cytoplasmic and membrane proteins. Plays a role in the quality control of integral membrane proteins. The protein is ATP-dependent zinc metalloprotease FtsH of Photobacterium profundum (strain SS9).